The sequence spans 396 residues: Elongation factor Tu (396 aa).

In terms of domain architecture, tr-type G spans 10 to 206; it reads KPHVNIGTIG…ACDTYIPAPV (197 aa). Positions 19-26 are G1; sequence GHVDHGKT. 19–26 is a binding site for GTP; the sequence is GHVDHGKT. T26 contributes to the Mg(2+) binding site. The G2 stretch occupies residues 60–64; it reads GITIS. The tract at residues 81–84 is G3; the sequence is DCPG. GTP contacts are provided by residues 81–85 and 136–139; these read DCPGH and NKVD. A G4 region spans residues 136–139; sequence NKVD. Residues 174–176 are G5; the sequence is SAL.

The protein belongs to the TRAFAC class translation factor GTPase superfamily. Classic translation factor GTPase family. EF-Tu/EF-1A subfamily. In terms of assembly, monomer.

It is found in the cytoplasm. It catalyses the reaction GTP + H2O = GDP + phosphate + H(+). GTP hydrolase that promotes the GTP-dependent binding of aminoacyl-tRNA to the A-site of ribosomes during protein biosynthesis. This Bdellovibrio bacteriovorus (strain ATCC 15356 / DSM 50701 / NCIMB 9529 / HD100) protein is Elongation factor Tu.